A 517-amino-acid chain; its full sequence is Crotonobetaine/carnitine--CoA ligase (517 aa).

Belongs to the ATP-dependent AMP-binding enzyme family.

It carries out the reaction 4-(trimethylamino)butanoate + ATP + CoA = 4-(trimethylamino)butanoyl-CoA + AMP + diphosphate. The enzyme catalyses crotonobetaine + ATP + CoA = crotonobetainyl-CoA + AMP + diphosphate. It catalyses the reaction (R)-carnitine + ATP + CoA = (R)-carnitinyl-CoA + AMP + diphosphate. It functions in the pathway amine and polyamine metabolism; carnitine metabolism. In terms of biological role, catalyzes the transfer of CoA to carnitine, generating the initial carnitinyl-CoA needed for the CaiB reaction cycle. Also has activity toward crotonobetaine and gamma-butyrobetaine. This is Crotonobetaine/carnitine--CoA ligase from Escherichia coli O8 (strain IAI1).